Reading from the N-terminus, the 396-residue chain is Maltose/maltodextrin-binding periplasmic protein (396 aa).

Residues 1 to 26 (MKIKTGARILALSALTTMMFSASALA) form the signal peptide.

This sequence belongs to the bacterial solute-binding protein 1 family. In terms of assembly, the complex is composed of two ATP-binding proteins (MalK), two transmembrane proteins (MalG and MalF) and a solute-binding protein (MalE).

The protein localises to the periplasm. Its function is as follows. Part of the ABC transporter complex MalEFGK involved in maltose/maltodextrin import. Binds maltose and higher maltodextrins. The chain is Maltose/maltodextrin-binding periplasmic protein (malE) from Klebsiella aerogenes (Enterobacter aerogenes).